The chain runs to 305 residues: Nuclear egress protein 1 (305 aa).

The disordered stretch occupies residues 1–42; sequence MYDIAPRRSGSRPGPGRDKTRRRSRFSAAGNPGVERRASRKS. The CCCH-type zinc finger occupies 105–224; sequence CLTLSGMGYY…YVIFPGTSAH (120 aa).

This sequence belongs to the herpesviridae NEC1 protein family. In terms of assembly, forms a heterohexameric complex with NEC2. Interacts with capsid vertex specific component 2/CVC2; this interaction directs the capsid to the host inner nuclear membrane to initiate budding. Phosphorylated at serine residues in the N-terminus. This phosphorylation regulates the localization within the inner nuclear membrane.

It is found in the host nucleus inner membrane. Its function is as follows. Plays an essential role in virion nuclear egress, the first step of virion release from infected cell. Within the host nucleus, NEC1 interacts with the newly formed capsid through the vertexes and directs it to the inner nuclear membrane by associating with NEC2. Induces the budding of the capsid at the inner nuclear membrane as well as its envelopment into the perinuclear space. There, the NEC1/NEC2 complex promotes the fusion of the enveloped capsid with the outer nuclear membrane and the subsequent release of the viral capsid into the cytoplasm where it will reach the secondary budding sites in the host Golgi or trans-Golgi network. This is Nuclear egress protein 1 from Human herpesvirus 2 (strain HG52) (HHV-2).